The primary structure comprises 241 residues: Interleukin-6 (241 aa).

An N-terminal signal peptide occupies residues 1 to 26 (MNSFTSALRPGPLGCSLALLLVVATA). Residues 32-51 (PVREDSNTKASPDKTLTPPG) form a disordered region. 2 disulfide bridges follow: C72/C78 and C101/C111. N108 carries an N-linked (GlcNAc...) asparagine glycan.

Belongs to the IL-6 superfamily. In terms of assembly, component of a hexamer of two molecules each of IL6, IL6R and IL6ST; first binds to IL6R to associate with the signaling subunit IL6ST. Interacts with IL6R (via the N-terminal ectodomain); this interaction may be affected by IL6R-binding with SORL1, hence decreasing IL6 cis signaling. Interacts with SORL1 (via the N-terminal ectodomain); this interaction leads to IL6 internalization and lysosomal degradation. May form a trimeric complex with the soluble SORL1 ectodomain and soluble IL6R receptor; this interaction might stabilize circulating IL6, hence promoting IL6 trans signaling.

Its subcellular location is the secreted. Its function is as follows. Cytokine with a wide variety of biological functions in immunity, tissue regeneration, and metabolism. Binds to IL6R, then the complex associates to the signaling subunit IL6ST/gp130 to trigger the intracellular IL6-signaling pathway. The interaction with the membrane-bound IL6R and IL6ST stimulates 'classic signaling', whereas the binding of IL6 and soluble IL6R to IL6ST stimulates 'trans-signaling'. Alternatively, 'cluster signaling' occurs when membrane-bound IL6:IL6R complexes on transmitter cells activate IL6ST receptors on neighboring receiver cells. Functionally, IL6 is a potent inducer of the acute phase response. Rapid production of IL6 contributes to host defense during infection and tissue injury, but excessive IL6 synthesis is involved in disease pathology. In the innate immune response, is synthesized by myeloid cells, such as macrophages and dendritic cells, upon recognition of pathogens through toll-like receptors (TLRs) at the site of infection or tissue injury. In the adaptive immune response, is required for the differentiation of B cells into immunoglobulin-secreting cells. Plays a major role in the differentiation of CD4(+) T cell subsets. Essential factor for the development of T follicular helper (Tfh) cells that are required for the induction of germinal-center formation. Required to drive naive CD4(+) T cells to the Th17 lineage. Also required for proliferation of myeloma cells and the survival of plasmablast cells. In terms of biological role, acts as an essential factor in bone homeostasis and on vessels directly or indirectly by induction of VEGF, resulting in increased angiogenesis activity and vascular permeability. Induces, through 'trans-signaling' and synergistically with IL1B and TNF, the production of VEGF. Involved in metabolic controls, is discharged into the bloodstream after muscle contraction increasing lipolysis and improving insulin resistance. 'Trans-signaling' in central nervous system also regulates energy and glucose homeostasis. Mediates, through GLP-1, crosstalk between insulin-sensitive tissues, intestinal L cells and pancreatic islets to adapt to changes in insulin demand. Also acts as a myokine. Plays a protective role during liver injury, being required for maintenance of tissue regeneration. Also has a pivotal role in iron metabolism by regulating HAMP/hepcidin expression upon inflammation or bacterial infection. Through activation of IL6ST-YAP-NOTCH pathway, induces inflammation-induced epithelial regeneration. The protein is Interleukin-6 (IL6) of Oryctolagus cuniculus (Rabbit).